We begin with the raw amino-acid sequence, 140 residues long: Gonadotropin subunit beta-2 (140 aa).

An N-terminal signal peptide occupies residues 1-23 (MSVPASSFLLLCFLMNSFSPAQS). Intrachain disulfides connect Cys-29/Cys-77, Cys-43/Cys-92, Cys-46/Cys-130, Cys-54/Cys-108, Cys-58/Cys-110, and Cys-113/Cys-120. Asn-33 is a glycosylation site (N-linked (GlcNAc...) asparagine).

The protein belongs to the glycoprotein hormones subunit beta family. In terms of assembly, heterodimer of an alpha and a beta chain.

The protein localises to the secreted. Its function is as follows. Involved in gametogenesis and steroidogenesis. The chain is Gonadotropin subunit beta-2 (cgbb) from Ictalurus punctatus (Channel catfish).